A 90-amino-acid chain; its full sequence is Large ribosomal subunit protein bL31 (90 aa).

The segment at 71–90 (KVKKFPSNADNQKEPAEEQE) is disordered. Residues 81–90 (NQKEPAEEQE) are compositionally biased toward basic and acidic residues.

This sequence belongs to the bacterial ribosomal protein bL31 family. Type A subfamily. In terms of assembly, part of the 50S ribosomal subunit.

Binds the 23S rRNA. The polypeptide is Large ribosomal subunit protein bL31 (rpmE) (Aster yellows witches'-broom phytoplasma (strain AYWB)).